Consider the following 2193-residue polypeptide: Genome polyprotein (2193 aa).

A disordered region spans residues 1–22 (MGSQVSTQRSGSHENSNSATEG). G2 carries N-myristoyl glycine; by host lipidation. At 2–1503 (GSQVSTQRSG…HLNRAVLVMQ (1502 aa)) the chain is on the cytoplasmic side. 2 amphipathic alpha-helix regions span residues 566–588 (GDRV…LTQA) and 568–588 (RVAD…LTQA). Catalysis depends on for protease 2A activity residues H883 and D901. Residues C918 and C920 each coordinate Zn(2+). Residue C972 is the For protease 2A activity of the active site. C978 and H980 together coordinate Zn(2+). The membrane-binding stretch occupies residues 1112 to 1184 (SASWLKKFND…EQSAASQEDL (73 aa)). The interval 1112–1250 (SASWLKKFND…SPGTGKSLAT (139 aa)) is oligomerization. The segment at 1133–1137 (SNKIS) is RNA-binding. Residues 1216-1374 (EKRMNNYMQF…YKTDLGRLDA (159 aa)) enclose the SF3 helicase domain. 1240 to 1247 (GSPGTGKS) contacts ATP. Zn(2+) is bound by residues C1381, C1392, S1393, and C1397. The segment at 1381–1397 (CSENNTANFKRCSPLVC) adopts a C4-type; degenerate zinc-finger fold. An RNA-binding region spans residues 1424-1431 (EYSNRSAI). An oligomerization region spans residues 1435-1440 (IEALFQ). Residues 1504–1519 (SIATVVAVVSLVYVIY) lie within the membrane without spanning it. Residues 1520-2193 (KLFAGFQGAY…NLRRNWLELF (674 aa)) lie on the Cytoplasmic side of the membrane. Residue Y1529 is modified to O-(5'-phospho-RNA)-tyrosine. The region spanning 1549–1727 (GPSLDFALSL…FCAGLKRSYF (179 aa)) is the Peptidase C3 domain. Active-site for protease 3C activity residues include H1588, E1619, and C1695. Positions 1958–2073 (GSLFAFDYSG…ASYPFPIDCL (116 aa)) constitute a RdRp catalytic domain. 2 residues coordinate Mg(2+): D1964 and D2060.

The protein belongs to the picornaviruses polyprotein family. As to quaternary structure, interacts with capsid protein VP1 and capsid protein VP3 to form heterotrimeric protomers. Interacts with capsid protein VP0, and capsid protein VP3 to form heterotrimeric protomers. Five protomers subsequently associate to form pentamers which serve as building blocks for the capsid. Interacts with capsid protein VP2, capsid protein VP3 and capsid protein VP4 following cleavage of capsid protein VP0. Interacts with host SCARB2. Interacts with host ARF6; this interaction mediates viral endocytosis. In terms of assembly, interacts with capsid protein VP1 and capsid protein VP3 in the mature capsid. Interacts with host SCARB2. As to quaternary structure, interacts with capsid protein VP0 and capsid protein VP1 to form heterotrimeric protomers. Five protomers subsequently associate to form pentamers which serve as building blocks for the capsid. Interacts with capsid protein VP4 in the mature capsid. Interacts with protein 2C; this interaction may be important for virion morphogenesis. Interacts with capsid protein VP1 and capsid protein VP3. In terms of assembly, homodimer. As to quaternary structure, interacts with host BAX; this interaction activates the mitochondrial apoptotic pathway. Interacts with host ILF2. Homohexamer; forms a hexameric ring structure with 6-fold symmetry characteristic of AAA+ ATPases. Interacts (via N-terminus) with host RTN3 (via reticulon domain); this interaction is important for viral replication. Interacts with capsid protein VP3; this interaction may be important for virion morphogenesis. In terms of assembly, interacts with protein 3CD. As to quaternary structure, homodimer. Interacts with host GBF1. Interacts (via GOLD domain) with host ACBD3 (via GOLD domain); this interaction allows the formation of a viral protein 3A/ACBD3 heterotetramer with a 2:2 stoichiometry, which will stimulate the recruitment of host PI4KB in order to synthesize PI4P at the viral RNA replication sites. Interacts with RNA-directed RNA polymerase. In terms of assembly, interacts with host IFIH1/MDA5; this interaction inhibits host IFIH1. Interacts with host RIGI. As to quaternary structure, interacts with protein 3AB and with RNA-directed RNA polymerase. Interacts with Viral protein genome-linked and with protein 3CD. Requires Mg(2+) as cofactor. Post-translationally, specific enzymatic cleavages in vivo by the viral proteases yield processing intermediates and the mature proteins. In terms of processing, myristoylation is required for the formation of pentamers during virus assembly. Further assembly of 12 pentamers and a molecule of genomic RNA generates the provirion. During virion maturation, immature virions are rendered infectious following cleavage of VP0 into VP4 and VP2. This maturation seems to be an autocatalytic event triggered by the presence of RNA in the capsid and it is followed by a conformational change infectious virion. Post-translationally, myristoylation is required during RNA encapsidation and formation of the mature virus particle. In terms of processing, VPg is uridylylated by the polymerase into VPg-pUpU. This acts as a nucleotide-peptide primer for the genomic RNA replication.

The protein resides in the virion. The protein localises to the host cytoplasm. Its subcellular location is the host cytoplasmic vesicle membrane. It is found in the host nucleus. The catalysed reaction is a ribonucleoside 5'-triphosphate + H2O = a ribonucleoside 5'-diphosphate + phosphate + H(+). It carries out the reaction Selective cleavage of Tyr-|-Gly bond in the picornavirus polyprotein.. It catalyses the reaction RNA(n) + a ribonucleoside 5'-triphosphate = RNA(n+1) + diphosphate. The enzyme catalyses Selective cleavage of Gln-|-Gly bond in the poliovirus polyprotein. In other picornavirus reactions Glu may be substituted for Gln, and Ser or Thr for Gly.. Its activity is regulated as follows. Replication or transcription is subject to high level of random mutations by the nucleotide analog ribavirin. In terms of biological role, forms an icosahedral capsid of pseudo T=3 symmetry with capsid proteins VP2 and VP3. The capsid is 300 Angstroms in diameter, composed of 60 copies of each capsid protein and enclosing the viral positive strand RNA genome. Capsid protein VP1 mainly forms the vertices of the capsid. Capsid protein VP1, together with VP2, interacts with host cell receptor SCARB2 to provide virion attachment to target host cells. This attachment induces virion internalization. This attachment induces virion internalization. After binding to its receptor, the capsid undergoes conformational changes. Capsid protein VP1 N-terminus (that contains an amphipathic alpha-helix) and capsid protein VP4 are externalized. Together, they shape a pore in the host membrane through which viral genome is translocated to host cell cytoplasm. Its function is as follows. Forms an icosahedral capsid of pseudo T=3 symmetry with capsid proteins VP2 and VP3. The capsid is 300 Angstroms in diameter, composed of 60 copies of each capsid protein and enclosing the viral positive strand RNA genome. Capsid protein VP2, together with VP1, interacts with host cell receptor SCARB2 to provide virion attachment to target host cells. Functionally, forms an icosahedral capsid of pseudo T=3 symmetry with capsid proteins VP2 and VP3. The capsid is 300 Angstroms in diameter, composed of 60 copies of each capsid protein and enclosing the viral positive strand RNA genome. Lies on the inner surface of the capsid shell. After binding to the host receptor, the capsid undergoes conformational changes. Capsid protein VP4 is released, Capsid protein VP1 N-terminus is externalized, and together, they shape a pore in the host membrane through which the viral genome is translocated into the host cell cytoplasm. In terms of biological role, component of immature procapsids, which is cleaved into capsid proteins VP4 and VP2 after maturation. Allows the capsid to remain inactive before the maturation step. Its function is as follows. Cysteine protease that cleaves viral polyprotein and specific host proteins. It is responsible for the autocatalytic cleavage between the P1 and P2 regions, which is the first cleavage occurring in the polyprotein. Also cleaves the host translation initiation factor EIF4G1, in order to shut down the capped cellular mRNA translation. Inhibits the host nucleus-cytoplasm protein and RNA trafficking by cleaving host members of the nuclear pores. Counteracts stress granule formation probably by antagonizing its assembly or promoting its dissassembly. Cleaves and inhibits host IFIH1/MDA5, thereby inhibiting the type-I IFN production and the establishment of the antiviral state. Cleaves and inhibits host MAVS, thereby inhibiting the type-I IFN production and the establishment of the antiviral state. Functionally, plays an essential role in the virus replication cycle by acting as a viroporin. Creates a pore in the host endoplasmic reticulum and as a consequence releases Ca2+ in the cytoplasm of infected cell. In turn, high levels of cytoplasmic calcium may trigger membrane trafficking and transport of viral ER-associated proteins to viroplasms, sites of viral genome replication. Also activates the mitochondrial apoptotic pathway by activating host BAX. Induces and associates with structural rearrangements of intracellular membranes. Displays RNA-binding, nucleotide binding and NTPase activities. May play a role in virion morphogenesis and viral RNA encapsidation by interacting with the capsid protein VP3. In terms of biological role, localizes the viral replication complex to the surface of membranous vesicles. Together with protein 3CD binds the Cis-Active RNA Element (CRE) which is involved in RNA synthesis initiation. Acts as a cofactor to stimulate the activity of 3D polymerase, maybe through a nucleid acid chaperone activity. Its function is as follows. Localizes the viral replication complex to the surface of membranous vesicles. It inhibits host cell endoplasmic reticulum-to-Golgi apparatus transport and causes the disassembly of the Golgi complex, possibly through GBF1 interaction. This would result in depletion of MHC, trail receptors and IFN receptors at the host cell surface. Plays an essential role in viral RNA replication by recruiting ACBD3 and PI4KB at the viral replication sites, thereby allowing the formation of the rearranged membranous structures where viral replication takes place. Functionally, acts as a primer for viral RNA replication and remains covalently bound to viral genomic RNA. VPg is uridylylated prior to priming replication into VPg-pUpU. The oriI viral genomic sequence may act as a template for this. The VPg-pUpU is then used as primer on the genomic RNA poly(A) by the RNA-dependent RNA polymerase to replicate the viral genome. During genome replication, the VPg-RNA linkage is removed by the host TDP2, thereby accelerating replication. During the late stage of the replication cycle, host TDP2 is excluded from sites of viral RNA synthesis and encapsidation, allowing for the generation of progeny virions. Involved in the viral replication complex and viral polypeptide maturation. It exhibits protease activity with a specificity and catalytic efficiency that is different from protease 3C. Protein 3CD lacks polymerase activity. Protein 3CD binds to the 5'UTR of the viral genome. In terms of biological role, major viral protease that mediates proteolytic processing of the polyprotein. Cleaves host EIF5B, contributing to host translation shutoff. Also cleaves host PABPC1, contributing to host translation shutoff. Disassembles host cytoplasmic stress granules by cleaving host G3BP1, although this effect is less prononced than the inhibition induced by protease 2A. Cleaves host RIGI and thus contributes to the inhibition of type I interferon production. Cleaves host IRF7 and thus contributes to the inhibition of type I interferon production. Cleaves host HNRNPA1 thereby increasing the translation of apoptosis protease activating factor APAF1, leading to apoptosis of the host cell. Cleaves host NLRP1, triggers host N-glycine-mediated degradation of the autoinhibitory NLRP1 N-terminal fragment. Its function is as follows. Replicates the viral genomic RNA on the surface of intracellular membranes. May form linear arrays of subunits that propagate along a strong head-to-tail interaction called interface-I. Covalently attaches UMP to a tyrosine of VPg, which is used to prime RNA synthesis. The positive stranded RNA genome is first replicated at virus induced membranous vesicles, creating a dsRNA genomic replication form. This dsRNA is then used as template to synthesize positive stranded RNA genomes. ss(+)RNA genomes are either translated, replicated or encapsidated. This is Genome polyprotein from Homo sapiens (Human).